A 195-amino-acid chain; its full sequence is Peptidyl-tRNA hydrolase (195 aa).

Residue tyrosine 18 coordinates tRNA. Catalysis depends on histidine 23, which acts as the Proton acceptor. TRNA is bound by residues tyrosine 69, asparagine 71, and asparagine 117.

The protein belongs to the PTH family. Monomer.

The protein localises to the cytoplasm. It catalyses the reaction an N-acyl-L-alpha-aminoacyl-tRNA + H2O = an N-acyl-L-amino acid + a tRNA + H(+). In terms of biological role, hydrolyzes ribosome-free peptidyl-tRNAs (with 1 or more amino acids incorporated), which drop off the ribosome during protein synthesis, or as a result of ribosome stalling. Functionally, catalyzes the release of premature peptidyl moieties from peptidyl-tRNA molecules trapped in stalled 50S ribosomal subunits, and thus maintains levels of free tRNAs and 50S ribosomes. This is Peptidyl-tRNA hydrolase from Nitrosomonas eutropha (strain DSM 101675 / C91 / Nm57).